The following is a 210-amino-acid chain: Homeobox protein Rhox5 (210 aa).

Residues 29-117 (KAEAFLQAGE…KNGKPEDRQM (89 aa)) are disordered. Residues 117-175 (MPLQGSRFAQQRLSELQSILQRTNSFDVPREDLYRLMDTCVARVQNWFKIRRAAARRNR) constitute a DNA-binding region (homeobox; atypical).

Its subcellular location is the nucleus. In terms of biological role, transcription factor required for differentiation of embryonic stem cells (ESCs) into primordial germ cells. In Mus minutoides (Southern African pygmy mouse), this protein is Homeobox protein Rhox5 (Rhox5).